The following is a 201-amino-acid chain: UPF0376 protein F10G2.1 (201 aa).

Residues 1-3 (MKH) lie on the Cytoplasmic side of the membrane. Residues 4–24 (FLLLAIIGILFLGSTYGASVA) traverse the membrane as a helical; Signal-anchor for type II membrane protein segment. Over 25-201 (TEKLKASNCT…LLECDFRNIQ (177 aa)) the chain is Extracellular. N-linked (GlcNAc...) asparagine glycans are attached at residues N32 and N124.

It belongs to the UPF0376 family.

The protein localises to the membrane. This chain is UPF0376 protein F10G2.1, found in Caenorhabditis elegans.